Reading from the N-terminus, the 142-residue chain is Baculoviral IAP repeat-containing protein 5 (142 aa).

A BIR repeat occupies 18 to 88 (RISTFKNWPF…KHSSGCAFLS (71 aa)). Residue Ser-20 is modified to Phosphoserine; by AURKC. Residue Lys-23 is modified to N6-acetyllysine. Thr-34 is modified (phosphothreonine; by CDK1 and CDK15). At Thr-48 the chain carries Phosphothreonine. 4 residues coordinate Zn(2+): Cys-57, Cys-60, His-77, and Cys-84. Residues Lys-90, Lys-110, Lys-112, and Lys-115 each carry the N6-acetyllysine modification. Thr-117 carries the phosphothreonine; by AURKB modification. N6-acetyllysine is present on Lys-129.

It belongs to the IAP family. In terms of assembly, monomer or homodimer. Exists as a homodimer in the apo state and as a monomer in the CPC-bound state. The monomer protects cells against apoptosis more efficiently than the dimer. Only the dimeric form is capable of enhancing tubulin stability in cells. When phosphorylated, interacts with LAMTOR5/HBXIP; the resulting complex binds pro-CASP9, as well as active CASP9, but much less efficiently. Component of the chromosomal passenger complex (CPC) composed of at least BIRC5/survivin, CDCA8/borealin, INCENP, AURKB or AURKC; in the complex forms a triple-helix bundle-based subcomplex with INCENP and CDCA8. Interacts with JTB. Interacts (via BIR domain) with histone H3 phosphorylated at 'Thr-3' (H3pT3). Interacts with EVI5. Interacts with GTP-bound RAN in both the S and M phases of the cell cycle. Interacts with USP9X. Interacts with tubulin. Interacts with BIRC2/c-IAP1. The acetylated form at Lys-129 interacts with STAT3. The monomeric form deacetylated at Lys-129 interacts with XPO1/CRM1. The monomeric form interacts with XIAP/BIRC4. Both the dimeric and monomeric form can interact with DIABLO/SMAC. Interacts with BIRC6/bruce. Interacts with FBXL7; this interaction facilitates the polyubiquitination and subsequent proteasomal degradation of BIRC5 by the SCF(FBXL7) E3 ubiquitin-protein ligase complex. Post-translationally, ubiquitinated by the Cul9-RING ubiquitin-protein ligase complex, leading to its degradation. Ubiquitination is required for centrosomal targeting. Deubiquitinated by USP35 or USP38; leading to stabilization. In terms of processing, acetylation at Lys-129 results in its homodimerization, while deacetylation promotes the formation of monomers which heterodimerize with XPO1/CRM1 which facilitates its nuclear export. The acetylated form represses STAT3 transactivation. The dynamic equilibrium between its acetylation and deacetylation at Lys-129 determines its interaction with XPO1/CRM1, its subsequent subcellular localization, and its ability to inhibit STAT3 transactivation. In vitro phosphorylation at Thr-117 by AURKB prevents interaction with INCENP and localization to mitotic chromosomes. Phosphorylation at Thr-48 by CK2 is critical for its mitotic and anti-apoptotic activities. Phosphorylation at Thr-34 by CDK15 is critical for its anti-apoptotic activity. Phosphorylation at Ser-20 by AURKC is critical for regulation of proper chromosome alignment and segregation, and possibly cytokinesis.

It is found in the cytoplasm. It localises to the nucleus. Its subcellular location is the chromosome. The protein resides in the centromere. The protein localises to the cytoskeleton. It is found in the spindle. It localises to the kinetochore. Its subcellular location is the midbody. In terms of biological role, multitasking protein that has dual roles in promoting cell proliferation and preventing apoptosis. Component of a chromosome passage protein complex (CPC) which is essential for chromosome alignment and segregation during mitosis and cytokinesis. Acts as an important regulator of the localization of this complex; directs CPC movement to different locations from the inner centromere during prometaphase to midbody during cytokinesis and participates in the organization of the center spindle by associating with polymerized microtubules. Involved in the recruitment of CPC to centromeres during early mitosis via association with histone H3 phosphorylated at 'Thr-3' (H3pT3) during mitosis. The complex with RAN plays a role in mitotic spindle formation by serving as a physical scaffold to help deliver the RAN effector molecule TPX2 to microtubules. May counteract a default induction of apoptosis in G2/M phase. The acetylated form represses STAT3 transactivation of target gene promoters. May play a role in neoplasia. Inhibitor of CASP3 and CASP7. Essential for the maintenance of mitochondrial integrity and function. This Pongo abelii (Sumatran orangutan) protein is Baculoviral IAP repeat-containing protein 5 (BIRC5).